The sequence spans 413 residues: Clamp protein VP6 (413 aa).

Belongs to the reoviridae clamp protein family. In terms of assembly, interacts with capsid proteins VP3, VP4 and VP7.

It is found in the virion. Functionally, located at the interface of the incomplete T=13 outer capsid and the pseudo T=2 inner capsid, 120 VP6 subunits clamp and stabilize the inner capsid shell. This is Clamp protein VP6 (S8) from Ctenopharyngodon idella (Grass carp).